Here is a 189-residue protein sequence, read N- to C-terminus: Interferon alpha-5 (189 aa).

A signal peptide spans Met-1–Gly-23. 2 cysteine pairs are disulfide-bonded: Cys-24–Cys-122 and Cys-52–Cys-162. An N-linked (GlcNAc...) asparagine glycan is attached at Asn-101.

Belongs to the alpha/beta interferon family.

The protein resides in the secreted. Produced by macrophages, IFN-alpha have antiviral activities. Interferon stimulates the production of two enzymes: a protein kinase and an oligoadenylate synthetase. This chain is Interferon alpha-5 (Ifna5), found in Mus musculus (Mouse).